The chain runs to 417 residues: Inner membrane transport protein YnfM (417 aa).

The segment at 1-22 (MSRTTTVDGAPASDTDKQSISQ) is disordered. Topologically, residues 1–38 (MSRTTTVDGAPASDTDKQSISQPNQFIKRGTPQFMRVT) are periplasmic. A helical transmembrane segment spans residues 39–59 (LALFSAGLATFALLYCVQPIL). At 60–73 (PVLSQEFGLTPANS) the chain is on the cytoplasmic side. Residues 74-94 (SISLSISTAMLAIGLLFTGPL) traverse the membrane as a helical segment. Residues 95 to 101 (SDAIGRK) are Periplasmic-facing. The chain crosses the membrane as a helical span at residues 102 to 122 (PVMVTALLLASICTLLSTMMT). The Cytoplasmic portion of the chain corresponds to 123-125 (SWH). A helical transmembrane segment spans residues 126–146 (GILIMRALIGLSLSGVAAVGM). Residues 147–152 (TYLSEE) lie on the Periplasmic side of the membrane. A helical membrane pass occupies residues 153–173 (IHPSFVAFSMGLYISGNSIGG). Topologically, residues 174–190 (MSGRLISGVFTDFFNWR) are cytoplasmic. A helical transmembrane segment spans residues 191–211 (IALAAIGCFALASALMFWKIL). Topologically, residues 212-241 (PESRHFRPTSLRPKTLFINFRLHWRDRGLP) are periplasmic. A helical membrane pass occupies residues 242-262 (LLFAEGFLLMGSFVTLFNYIG). Residues 263–264 (YR) lie on the Cytoplasmic side of the membrane. The helical transmembrane segment at 265 to 285 (LMLSPWHVSQAVVGLLSLAYL) threads the bilayer. The Periplasmic segment spans residues 286 to 315 (TGTWSSPKAGTMTTRYGRGPVMLFSTGVML). A helical membrane pass occupies residues 316–336 (FGLLMTLFSSLWLIFAGMLLF). Over 337-364 (SAGFFAAHSVASSWIGPRAKRAKGQASS) the chain is Cytoplasmic. A helical membrane pass occupies residues 365 to 385 (LYLFSYYLGSSIAGTLGGVFW). Topologically, residues 386-387 (HN) are periplasmic. The chain crosses the membrane as a helical span at residues 388–408 (YGWNGVGAFIALMLVIALLVG). Residues 409–417 (TRLHRRLHA) lie on the Cytoplasmic side of the membrane.

Belongs to the major facilitator superfamily.

It localises to the cell inner membrane. This Escherichia coli (strain K12) protein is Inner membrane transport protein YnfM (ynfM).